The primary structure comprises 285 residues: Sulfotransferase 2A1 (285 aa).

3'-phosphoadenylyl sulfate-binding residues include Lys44, Ser45, Gly46, Thr47, Asn48, and Trp49. The Proton acceptor role is filled by His99. The 3'-phosphoadenylyl sulfate site is built by Arg121, Ser129, Tyr184, Ser218, Met223, Arg247, Lys248, and Gly249.

The protein belongs to the sulfotransferase 1 family. As to quaternary structure, homodimer. As to expression, highly expressed in liver.

The protein localises to the cytoplasm. The enzyme catalyses an alcohol + 3'-phosphoadenylyl sulfate = an alkyl sulfate + adenosine 3',5'-bisphosphate + H(+). The catalysed reaction is taurolithocholate + 3'-phosphoadenylyl sulfate = taurolithocholate 3-sulfate + adenosine 3',5'-bisphosphate + H(+). It catalyses the reaction pregnenolone + 3'-phosphoadenylyl sulfate = pregnenolone sulfate + adenosine 3',5'-bisphosphate + H(+). It carries out the reaction 3beta-hydroxyandrost-5-en-17-one + 3'-phosphoadenylyl sulfate = dehydroepiandrosterone 3-sulfate + adenosine 3',5'-bisphosphate + H(+). The enzyme catalyses lithocholate + 3'-phosphoadenylyl sulfate = lithocholate sulfate + adenosine 3',5'-bisphosphate + H(+). The catalysed reaction is (24S)-hydroxycholesterol + 3'-phosphoadenylyl sulfate = (24S)-hydroxycholesterol 24-sulfate + adenosine 3',5'-bisphosphate + H(+). It catalyses the reaction (24S)-hydroxycholesterol + 3'-phosphoadenylyl sulfate = (24S)-hydroxycholesterol 3-sulfate + adenosine 3',5'-bisphosphate + H(+). It carries out the reaction (24S)-hydroxycholesterol 24-sulfate + 3'-phosphoadenylyl sulfate = (24S)-hydroxycholesterol 3,24-disulfate + adenosine 3',5'-bisphosphate + H(+). The enzyme catalyses androsterone + 3'-phosphoadenylyl sulfate = androsterone 3alpha-sulfate + adenosine 3',5'-bisphosphate + H(+). Functionally, sulfotransferase that utilizes 3'-phospho-5'-adenylyl sulfate (PAPS) as sulfonate donor to catalyze the sulfonation of steroids and bile acids in the liver and adrenal glands. Mediates the sulfation of a wide range of steroids and sterols, including pregnenolone, androsterone, DHEA, bile acids, cholesterol and as well many xenobiotics that contain alcohol and phenol functional groups. Sulfonation increases the water solubility of most compounds, and therefore their renal excretion, but it can also result in bioactivation to form active metabolites. Plays an important role in maintening steroid and lipid homeostasis. Plays a key role in bile acid metabolism. In addition, catalyzes the metabolic activation of potent carcinogenic polycyclic arylmethanols. This Mus musculus (Mouse) protein is Sulfotransferase 2A1 (Sult2a1).